A 96-amino-acid polypeptide reads, in one-letter code: Tenecin-3 (96 aa).

A signal peptide spans 1–18; it reads MKTFVICLILVVAVSAAP. A disordered region spans residues 19–96; the sequence is DHHDGHLGGH…HQGGYKTHGH (78 aa). Repeat copies occupy residues 23–26, 31–34, 35–38, 39–42, 43–46, 47–50, 51–54, 59–62, 63–66, 67–70, 77–80, and 86–89. The tract at residues 23-89 is 12 X 4 AA repeats of G-X-X-G; sequence GHLGGHQTGH…GPGTGAGHQG (67 aa). Residues 26–89 show a composition bias toward gly residues; that stretch reads GGHQTGHQGG…GPGTGAGHQG (64 aa).

To H.diomphalia holotricin 3.

Its subcellular location is the secreted. Its function is as follows. Antifungal heat stable protein produced in response to injury. It is active against C.albicans. No antibacterial activity against Gram-positive and Gram-negative bacteria. In Tenebrio molitor (Yellow mealworm beetle), this protein is Tenecin-3.